The primary structure comprises 89 residues: Sugar transporter SemiSWEET (89 aa).

Helical transmembrane passes span 4–27 (ILLT…IKTI), 35–55 (ISVV…AYGI), and 60–82 (FAVL…ITLI). Residues 7–59 (TGLFAAFFTTFAFAPQSIKTIRTRNTEGISVVMYIMFLTGVISWIAYGIMRSD) enclose the PQ-loop domain.

Homodimer.

The protein resides in the cell membrane. The homodimer mediates transmembrane sugar transport down a concentration gradient. Transport is probably effected by rocking-type movements, where a cargo-binding cavity opens first on one and then on the other side of the membrane. This is Sugar transporter SemiSWEET from Escherichia coli (strain UMEA 3162-1).